We begin with the raw amino-acid sequence, 138 residues long: Small ribosomal subunit protein bS6 (138 aa).

Over residues 97-121 the composition is skewed to basic and acidic residues; the sequence is TEQSEMLKAEENRSERRERRDRPDN. A disordered region spans residues 97–138; it reads TEQSEMLKAEENRSERRERRDRPDNTDGSNENDSDSDNNADE. A compositionally biased stretch (acidic residues) spans 126–138; sequence NENDSDSDNNADE.

The protein belongs to the bacterial ribosomal protein bS6 family.

Its function is as follows. Binds together with bS18 to 16S ribosomal RNA. The polypeptide is Small ribosomal subunit protein bS6 (Stutzerimonas stutzeri (strain A1501) (Pseudomonas stutzeri)).